We begin with the raw amino-acid sequence, 350 residues long: Protein-glutamate methylesterase/protein-glutamine glutaminase 2 (350 aa).

In terms of domain architecture, Response regulatory spans 3 to 121; the sequence is RVLLVDDSPV…DPDYEEAVSE (119 aa). Residue Asp54 is modified to 4-aspartylphosphate. The 165-residue stretch at 158–322 folds into the CheB-type methylesterase domain; it reads IHQDIRVIVI…SFVYGMPGAA (165 aa). Catalysis depends on residues Ser170, His197, and Asp290.

Belongs to the CheB family. Phosphorylated by CheA. Phosphorylation of the N-terminal regulatory domain activates the methylesterase activity.

It localises to the cytoplasm. The catalysed reaction is [protein]-L-glutamate 5-O-methyl ester + H2O = L-glutamyl-[protein] + methanol + H(+). The enzyme catalyses L-glutaminyl-[protein] + H2O = L-glutamyl-[protein] + NH4(+). Its function is as follows. Involved in chemotaxis. Part of a chemotaxis signal transduction system that modulates chemotaxis in response to various stimuli. Catalyzes the demethylation of specific methylglutamate residues introduced into the chemoreceptors (methyl-accepting chemotaxis proteins or MCP) by CheR. Also mediates the irreversible deamidation of specific glutamine residues to glutamic acid. This chain is Protein-glutamate methylesterase/protein-glutamine glutaminase 2, found in Methanospirillum hungatei JF-1 (strain ATCC 27890 / DSM 864 / NBRC 100397 / JF-1).